The chain runs to 226 residues: Thiamine-phosphate synthase (226 aa).

Residues 46-50 (QFRDK) and Asp83 contribute to the 4-amino-2-methyl-5-(diphosphooxymethyl)pyrimidine site. Residues Asp84 and Asp103 each coordinate Mg(2+). Ser122 is a 4-amino-2-methyl-5-(diphosphooxymethyl)pyrimidine binding site. 2-[(2R,5Z)-2-carboxy-4-methylthiazol-5(2H)-ylidene]ethyl phosphate is bound at residue 149 to 151 (TQS). Residue Lys152 participates in 4-amino-2-methyl-5-(diphosphooxymethyl)pyrimidine binding. Residues Gly181 and 201–202 (IT) contribute to the 2-[(2R,5Z)-2-carboxy-4-methylthiazol-5(2H)-ylidene]ethyl phosphate site.

Belongs to the thiamine-phosphate synthase family. Mg(2+) is required as a cofactor.

The catalysed reaction is 2-[(2R,5Z)-2-carboxy-4-methylthiazol-5(2H)-ylidene]ethyl phosphate + 4-amino-2-methyl-5-(diphosphooxymethyl)pyrimidine + 2 H(+) = thiamine phosphate + CO2 + diphosphate. It catalyses the reaction 2-(2-carboxy-4-methylthiazol-5-yl)ethyl phosphate + 4-amino-2-methyl-5-(diphosphooxymethyl)pyrimidine + 2 H(+) = thiamine phosphate + CO2 + diphosphate. It carries out the reaction 4-methyl-5-(2-phosphooxyethyl)-thiazole + 4-amino-2-methyl-5-(diphosphooxymethyl)pyrimidine + H(+) = thiamine phosphate + diphosphate. It functions in the pathway cofactor biosynthesis; thiamine diphosphate biosynthesis; thiamine phosphate from 4-amino-2-methyl-5-diphosphomethylpyrimidine and 4-methyl-5-(2-phosphoethyl)-thiazole: step 1/1. Condenses 4-methyl-5-(beta-hydroxyethyl)thiazole monophosphate (THZ-P) and 2-methyl-4-amino-5-hydroxymethyl pyrimidine pyrophosphate (HMP-PP) to form thiamine monophosphate (TMP). The polypeptide is Thiamine-phosphate synthase (Haemophilus influenzae (strain PittGG)).